A 395-amino-acid polypeptide reads, in one-letter code: Dihydrolipoyllysine-residue succinyltransferase component of 2-oxoglutarate dehydrogenase complex (395 aa).

The Lipoyl-binding domain occupies 2-77 (RVKIIVPSLG…AVGEEIGEIN (76 aa)). Position 43 is an N6-lipoyllysine (Lys43). Residues 111 to 148 (TLAPSVQKLVTENKLDPNNIKGTGRDGRITKGDVLATI) enclose the Peripheral subunit-binding (PSBD) domain. Active-site residues include His366 and Asp370.

This sequence belongs to the 2-oxoacid dehydrogenase family. As to quaternary structure, forms a 24-polypeptide structural core with octahedral symmetry. Part of the 2-oxoglutarate dehydrogenase (OGDH) complex composed of E1 (2-oxoglutarate dehydrogenase), E2 (dihydrolipoamide succinyltransferase) and E3 (dihydrolipoamide dehydrogenase); the complex contains multiple copies of the three enzymatic components (E1, E2 and E3). It depends on (R)-lipoate as a cofactor.

The catalysed reaction is N(6)-[(R)-dihydrolipoyl]-L-lysyl-[protein] + succinyl-CoA = N(6)-[(R)-S(8)-succinyldihydrolipoyl]-L-lysyl-[protein] + CoA. It participates in amino-acid degradation; L-lysine degradation via saccharopine pathway; glutaryl-CoA from L-lysine: step 6/6. Its function is as follows. E2 component of the 2-oxoglutarate dehydrogenase (OGDH) complex which catalyzes the second step in the conversion of 2-oxoglutarate to succinyl-CoA and CO(2). This chain is Dihydrolipoyllysine-residue succinyltransferase component of 2-oxoglutarate dehydrogenase complex (sucB), found in Rickettsia conorii (strain ATCC VR-613 / Malish 7).